Reading from the N-terminus, the 367-residue chain is Glutamate 5-kinase (367 aa).

Lys10 is a binding site for ATP. Positions 50, 137, and 149 each coordinate substrate. Residues 169 to 170 and 211 to 217 contribute to the ATP site; these read TD and TGGMETK. Positions 275–353 constitute a PUA domain; it reads AGDITVDDGA…QDISDILGYE (79 aa).

This sequence belongs to the glutamate 5-kinase family.

It localises to the cytoplasm. The enzyme catalyses L-glutamate + ATP = L-glutamyl 5-phosphate + ADP. The protein operates within amino-acid biosynthesis; L-proline biosynthesis; L-glutamate 5-semialdehyde from L-glutamate: step 1/2. In terms of biological role, catalyzes the transfer of a phosphate group to glutamate to form L-glutamate 5-phosphate. This chain is Glutamate 5-kinase, found in Sodalis glossinidius (strain morsitans).